Reading from the N-terminus, the 722-residue chain is Polyribonucleotide nucleotidyltransferase (722 aa).

Mg(2+) contacts are provided by Asp-487 and Asp-493. A KH domain is found at 554-613; that stretch reads PRMVSFKIHPDKIREVIGKGGATIQALTKETGCSIDIKDDGTVTIASTSAEGMAEAKARI. The 69-residue stretch at 623–691 folds into the S1 motif domain; it reads GKIYEGPVVK…ERGRLRLSLK (69 aa).

The protein belongs to the polyribonucleotide nucleotidyltransferase family. The cofactor is Mg(2+).

The protein resides in the cytoplasm. The catalysed reaction is RNA(n+1) + phosphate = RNA(n) + a ribonucleoside 5'-diphosphate. Its function is as follows. Involved in mRNA degradation. Catalyzes the phosphorolysis of single-stranded polyribonucleotides processively in the 3'- to 5'-direction. The sequence is that of Polyribonucleotide nucleotidyltransferase from Polynucleobacter asymbioticus (strain DSM 18221 / CIP 109841 / QLW-P1DMWA-1) (Polynucleobacter necessarius subsp. asymbioticus).